The primary structure comprises 609 residues: Putative 4-coumarate--CoA ligase-like 8 (609 aa).

Ser-194, Ser-195, Gly-196, Thr-197, Thr-198, and Lys-202 together coordinate ATP. Phe-252 and Ser-256 together coordinate (E)-4-coumaroyl-AMP. Arg-274 contributes to the CoA binding site. The SBD1 stretch occupies residues Ser-276–Gln-348. 4 residues coordinate (E)-4-coumaroyl-AMP: Gly-326, Gln-348, Thr-353, and Met-361. Residues Gln-348 and Thr-353 each coordinate ATP. The tract at residues Cys-349–Tyr-450 is SBD2. The ATP site is built by Asp-482 and Arg-497. (E)-4-coumaroyl-AMP-binding residues include Lys-499 and Lys-503. Position 506 (Ala-506) interacts with CoA. Residue Lys-589 participates in ATP binding.

This sequence belongs to the ATP-dependent AMP-binding enzyme family. Requires Mg(2+) as cofactor.

The enzyme catalyses (E)-4-coumarate + ATP + CoA = (E)-4-coumaroyl-CoA + AMP + diphosphate. The catalysed reaction is (E)-4-coumarate + ATP + H(+) = (E)-4-coumaroyl-AMP + diphosphate. It carries out the reaction (E)-4-coumaroyl-AMP + CoA = (E)-4-coumaroyl-CoA + AMP + H(+). Functionally, carboxylate--CoA ligase that may use 4-coumarate as substrate. Follows a two-step reaction mechanism, wherein the carboxylate substrate first undergoes adenylation by ATP, followed by a thioesterification in the presence of CoA to yield the final CoA thioester. This Oryza sativa subsp. japonica (Rice) protein is Putative 4-coumarate--CoA ligase-like 8 (4CLL8).